The following is a 262-amino-acid chain: Probable carboxylesterase Culp3 (262 aa).

A signal peptide spans 1-41; that stretch reads MNNRPIRLLTSGRAGLGAGALITAVVLLIALGAVWTPVAFA. A disulfide bond links cysteine 44 and cysteine 114. Serine 125 acts as the Nucleophile in catalysis. Cysteine 188 and cysteine 195 are joined by a disulfide. Aspartate 192 is a catalytic residue. The Proton donor/acceptor role is filled by histidine 206. The segment at 241-262 is disordered; sequence LPGSVLQMPGTAAPAPESLHGR.

Belongs to the cutinase family.

The protein resides in the secreted. Its function is as follows. Shows weak esterase activity with the p-nitrophenol-linked aliphatic ester pNP-butyrate. Does not exhibit cutinase activity. The protein is Probable carboxylesterase Culp3 (cut3) of Mycobacterium tuberculosis (strain ATCC 25618 / H37Rv).